We begin with the raw amino-acid sequence, 89 residues long: Ubiquinol-cytochrome-c reductase complex assembly factor 3 (89 aa).

At 1–7 the chain is on the mitochondrial matrix side; sequence MEVARKA. A helical transmembrane segment spans residues 8–28; it reads LVAVAVLGGGAGVGSILFALV. Residues 23–80 are mediates lipid-binding; sequence ILFALVTPGELQKQSMLQEMPERDSRRRDEAVRTTELVMATLKDAAATKENVAWRRNW. At 29–89 the chain is on the mitochondrial intermembrane side; that stretch reads TPGELQKQSM…WTVSGDGRSA (61 aa).

It belongs to the UQCC3 family. Associates with the ubiquinol-cytochrome c reductase complex (mitochondrial respiratory chain complex III(CIII) or cytochrome b-c1 complex). Interacts with UQCC1. Forms a complex, named COMC, composed of UQCC1, UQCC2; UQCC3 and UQCC4; mediates MT-CYB hemylation and association with the first nuclear-encoded complex III subunit UQCRQ. Post-translationally, probably cleaved by OMA1 under mitochondrial stress conditions.

It localises to the mitochondrion inner membrane. In terms of biological role, required for the assembly of the ubiquinol-cytochrome c reductase complex (mitochondrial respiratory chain complex III or cytochrome b-c1 complex), mediating cytochrome b recruitment and probably stabilization within the complex. Thereby, plays an important role in ATP production by mitochondria. Cardiolipin-binding protein, it may also control the cardiolipin composition of mitochondria membranes and their morphology. This chain is Ubiquinol-cytochrome-c reductase complex assembly factor 3, found in Mus musculus (Mouse).